The chain runs to 59 residues: Small ribosomal subunit protein bS21 (59 aa).

A disordered region spans residues 40–59 (KPSVKRKKKSEAARKRKSFR). The segment covering 43–59 (VKRKKKSEAARKRKSFR) has biased composition (basic residues).

This sequence belongs to the bacterial ribosomal protein bS21 family.

In Desulforamulus reducens (strain ATCC BAA-1160 / DSM 100696 / MI-1) (Desulfotomaculum reducens), this protein is Small ribosomal subunit protein bS21.